We begin with the raw amino-acid sequence, 126 residues long: Aspartate 1-decarboxylase (126 aa).

Catalysis depends on Ser-25, which acts as the Schiff-base intermediate with substrate; via pyruvic acid. The residue at position 25 (Ser-25) is a Pyruvic acid (Ser). Thr-57 contacts substrate. Tyr-58 serves as the catalytic Proton donor. Residue 73-75 (GAA) participates in substrate binding.

The protein belongs to the PanD family. As to quaternary structure, heterooctamer of four alpha and four beta subunits. The cofactor is pyruvate. Is synthesized initially as an inactive proenzyme, which is activated by self-cleavage at a specific serine bond to produce a beta-subunit with a hydroxyl group at its C-terminus and an alpha-subunit with a pyruvoyl group at its N-terminus.

Its subcellular location is the cytoplasm. It catalyses the reaction L-aspartate + H(+) = beta-alanine + CO2. Its pathway is cofactor biosynthesis; (R)-pantothenate biosynthesis; beta-alanine from L-aspartate: step 1/1. In terms of biological role, catalyzes the pyruvoyl-dependent decarboxylation of aspartate to produce beta-alanine. This chain is Aspartate 1-decarboxylase, found in Azotobacter vinelandii (strain DJ / ATCC BAA-1303).